A 226-amino-acid polypeptide reads, in one-letter code: ATP-dependent dethiobiotin synthetase BioD (226 aa).

Position 14–19 (14–19) interacts with ATP; it reads GIGKTF. T18 provides a ligand contact to Mg(2+). K39 is an active-site residue. S43 is a binding site for substrate. ATP-binding positions include D56, 117–120, 177–178, 206–208, and N213; these read EGVG, NT, and PHI. Mg(2+)-binding residues include D56 and E117.

This sequence belongs to the dethiobiotin synthetase family. In terms of assembly, homodimer. Mg(2+) serves as cofactor.

The protein resides in the cytoplasm. The enzyme catalyses (7R,8S)-7,8-diammoniononanoate + CO2 + ATP = (4R,5S)-dethiobiotin + ADP + phosphate + 3 H(+). Its pathway is cofactor biosynthesis; biotin biosynthesis; biotin from 7,8-diaminononanoate: step 1/2. Functionally, catalyzes a mechanistically unusual reaction, the ATP-dependent insertion of CO2 between the N7 and N8 nitrogen atoms of 7,8-diaminopelargonic acid (DAPA, also called 7,8-diammoniononanoate) to form a ureido ring. This Xylella fastidiosa (strain M12) protein is ATP-dependent dethiobiotin synthetase BioD.